Here is a 329-residue protein sequence, read N- to C-terminus: GTPase Obg (329 aa).

The Obg domain maps to 1–159; that stretch reads MQFIDQARIS…WPLQLELKLL (159 aa). The region spanning 160–328 is the OBG-type G domain; it reads AEVGIIGLPN…MLDRVWSELG (169 aa). Residues 166-173, 191-195, 213-216, 280-283, and 309-311 contribute to the ATP site; these read GLPNAGKS, FTTLI, DIPG, NKQE, and SAA. Positions 173 and 193 each coordinate Mg(2+).

The protein belongs to the TRAFAC class OBG-HflX-like GTPase superfamily. OBG GTPase family. Monomer. Mg(2+) serves as cofactor.

It localises to the cytoplasm. Its function is as follows. An essential GTPase which binds GTP, GDP and possibly (p)ppGpp with moderate affinity, with high nucleotide exchange rates and a fairly low GTP hydrolysis rate. Plays a role in control of the cell cycle, stress response, ribosome biogenesis and in those bacteria that undergo differentiation, in morphogenesis control. This is GTPase Obg from Synechococcus sp. (strain CC9311).